Here is a 394-residue protein sequence, read N- to C-terminus: Probable purine permease 23 (394 aa).

Basic and acidic residues predominate over residues 1 to 20 (MEMTEASKHTTTHEESEHVQ). Positions 1–24 (MEMTEASKHTTTHEESEHVQNPEP) are disordered. Phosphoserine is present on S29. The next 10 membrane-spanning stretches (helical) occupy residues 43–63 (ISVL…ILLL), 85–105 (WMQA…FFIF), 124–144 (LILL…LYAL), 152–172 (GFFM…TAII), 180–200 (WIII…PVFS), 211–231 (GIQA…LCLV), 254–274 (VLEM…VGLF), 301–321 (VGLA…VLYV), 328–348 (IVHM…FDFI), and 352–372 (FSWP…SYFY).

It belongs to the purine permeases (TC 2.A.7.14) family.

It localises to the membrane. The protein is Probable purine permease 23 (PUP23) of Arabidopsis thaliana (Mouse-ear cress).